Consider the following 440-residue polypeptide: Enolase (440 aa).

Gln168 is a (2R)-2-phosphoglycerate binding site. The active-site Proton donor is the Glu210. Asp249, Glu300, and Asp326 together coordinate Mg(2+). The (2R)-2-phosphoglycerate site is built by Lys351, Arg380, Ser381, and Lys402. Residue Lys351 is the Proton acceptor of the active site.

This sequence belongs to the enolase family. Mg(2+) serves as cofactor.

Its subcellular location is the cytoplasm. It is found in the secreted. The protein localises to the cell surface. It catalyses the reaction (2R)-2-phosphoglycerate = phosphoenolpyruvate + H2O. The protein operates within carbohydrate degradation; glycolysis; pyruvate from D-glyceraldehyde 3-phosphate: step 4/5. In terms of biological role, catalyzes the reversible conversion of 2-phosphoglycerate (2-PG) into phosphoenolpyruvate (PEP). It is essential for the degradation of carbohydrates via glycolysis. This Ureaplasma parvum serovar 3 (strain ATCC 27815 / 27 / NCTC 11736) protein is Enolase.